Here is a 1586-residue protein sequence, read N- to C-terminus: COP1-interactive protein 1 (1586 aa).

In terms of domain architecture, NAB spans 10-84 (LKSFFEPHFD…RQYDDLTGEI (75 aa)). Residues 88–119 (VNGKGESSSSSSSDSDSDHSSKRKVKRNGNGK) are disordered. 4 coiled-coil regions span residues 128–411 (TGAL…LKES), 437–1196 (ASEL…LKEE), 1225–1336 (LETL…TEAT), and 1372–1406 (MESL…SNQK). LRR repeat units lie at residues 173–187 (SEEI…TEKL), 188–210 (EDEK…VAGK), 216–239 (NQKL…GIKR), 261–285 (TSNL…MNSA), and 287–309 (EENK…GQTT). The segment covering 249–262 (DWKTTSDQLKDETS) has biased composition (basic and acidic residues). Positions 249–286 (DWKTTSDQLKDETSNLKQQLEASEQRVSELTSGMNSAE) are disordered. Residues 325–353 (KEKESEHSSLVELHKTHERESSSQVKELE) are disordered. 20 LRR repeats span residues 384-410 (IAEL…QLKE), 437-461 (ASEL…LKAA), 473-498 (VETM…KLKD), 560-586 (IAEL…QLKE), 613-637 (VSEL…LKDA), 649-674 (LEIM…ELKD), 768-792 (LSEL…LNAA), 824-850 (LAES…AHKR), 856-880 (VKEL…LNSS), 902-929 (ESTI…LFSL), 944-968 (LRGL…LKAA), 990-1014 (QIMV…ESKL), 1077-1101 (ISEL…LEDN), 1120-1144 (RAEL…SEEA), 1195-1220 (EEII…KIKG), 1247-1272 (VQMH…NLKN), 1372-1396 (MESL…ISNI), 1398-1417 (VKLR…LTEK), 1426-1448 (AKHL…TYRG), and 1450-1474 (IKEI…LTEK). The tract at residues 430 to 456 (QRDSSTRASELEAQLESSKQQVSDLSA) is disordered. A compositionally biased stretch (polar residues) spans 444 to 455 (LESSKQQVSDLS). The segment at 965–985 (LKAAEEESRTMSTKISETSDE) is disordered. A coiled-coil region spans residues 1496–1530 (VIERNHEKEKMNKEIEKKDEEIKKLGGKVREDEKE).

Interacts with COP1 coiled-coil region. As to expression, mainly expressed in photosynthetic and vascular tissues. Accumulates in both dark-grown and light-grown seedlings roots and shoots, leaves and flowers (at protein level).

It localises to the cell membrane. The protein localises to the cytoplasm. Its subcellular location is the cytoskeleton. Functionally, positive regulator of abscisic acid (ABA)-mediated signaling pathways involved in abiotic stress responses (e.g. osmotic stress) and leading to various plant adaptation (e.g. stomata closure). This Arabidopsis thaliana (Mouse-ear cress) protein is COP1-interactive protein 1.